A 178-amino-acid chain; its full sequence is Adenine phosphoribosyltransferase (178 aa).

This sequence belongs to the purine/pyrimidine phosphoribosyltransferase family. As to quaternary structure, homodimer.

It localises to the cytoplasm. The enzyme catalyses AMP + diphosphate = 5-phospho-alpha-D-ribose 1-diphosphate + adenine. Its pathway is purine metabolism; AMP biosynthesis via salvage pathway; AMP from adenine: step 1/1. Catalyzes a salvage reaction resulting in the formation of AMP, that is energically less costly than de novo synthesis. This Novosphingobium aromaticivorans (strain ATCC 700278 / DSM 12444 / CCUG 56034 / CIP 105152 / NBRC 16084 / F199) protein is Adenine phosphoribosyltransferase.